We begin with the raw amino-acid sequence, 58 residues long: UPF0339 protein TDE_0826 (58 aa).

Belongs to the UPF0339 family.

In Treponema denticola (strain ATCC 35405 / DSM 14222 / CIP 103919 / JCM 8153 / KCTC 15104), this protein is UPF0339 protein TDE_0826.